Reading from the N-terminus, the 299-residue chain is MEAFVSGGAGGVGAAAVVGVFVAAAVVGGFVAAVALAERAGVIAPRKRPNAPPAVPGLPIIGNLHQLKEKKPHQTFTKWAEIYGPIYTIRIGASSVVVLNSTEVAKEAMVAKFSSISTRKLSKALTVLTRDKSMVATSDYGDFHKMVKRYVMSSTLGTSAQKKFRDTRDMMINNMLSTFHKLVKDDPHVPLIFRDVFKDELFRLSMIQSLGEDVSSVYVDEFGRDISKEEIYNATVTDMMMCAIEVDWRDFFSYLSWVPNKSFETRVFTAEARRTAVMRALIKQQKERIVRGEVTKCIL.

A helical transmembrane segment spans residues 16 to 36 (AVVGVFVAAAVVGGFVAAVAL).

It belongs to the cytochrome P450 family. In terms of tissue distribution, expressed in roots and panicles.

It is found in the membrane. The polypeptide is Ent-kaurene oxidase-like protein 1 (Oryza sativa subsp. japonica (Rice)).